Consider the following 537-residue polypeptide: Endoprotease aex-5 (537 aa).

The N-terminal stretch at 1–17 is a signal peptide; that stretch reads MKLIFLLLLFGVSPIVC. Residues 18–99 constitute a propeptide that is removed on maturation; the sequence is QDFEDGVFLA…KLQGFRRYKR (82 aa). In terms of domain architecture, Peptidase S8 spans 111-413; it reads VWNLTPSLYI…FGLLNAQKLV (303 aa). Residue N129 is glycosylated (N-linked (GlcNAc...) asparagine). Residues D139 and H178 each act as charge relay system in the active site. C286 and C316 form a disulfide bridge. The active-site Charge relay system is the S346. The N-linked (GlcNAc...) asparagine glycan is linked to N380. In terms of domain architecture, P/Homo B spans 407 to 537; it reads LNAQKLVVMA…KMFKVVGTMS (131 aa).

The protein belongs to the peptidase S8 family. Furin subfamily.

It is found in the secreted. Probable serine endoprotease which cleaves preproteins at paired basic amino acids. May process FMRFamide-like (flp) and neuropeptide-like protein (nlp) neuropeptides. In muscles, involved in neuronal retrograde signaling by regulating presynaptic activity and localization of synaptic vesicle fusion protein unc-13 at the neuromuscular junction (NMJ). Acts in the intestine to regulate anterior body muscle contractions (aBOC) and the expulsion steps during the defecation motor program (DMP). Probably by regulating DMP, required for fatty acid uptake by intestinal cells and therefore regulates the levels of triglycerides in the intestine. Plays a role in locomotion. This Caenorhabditis elegans protein is Endoprotease aex-5.